The following is a 1185-amino-acid chain: ELMO domain-containing protein F (1185 aa).

8 disordered regions span residues Gln-88 to Asn-133, Ile-176 to Glu-196, Asn-361 to Glu-409, Lys-566 to Ser-628, Glu-642 to Gly-805, Leu-819 to Ile-868, Asp-883 to Thr-989, and Gln-1044 to Leu-1114. Composition is skewed to low complexity over residues Ser-94–Ile-127, Ile-176–Thr-194, Asn-361–Val-406, and Pro-587–Ser-613. The ELMO domain maps to Asp-275–Lys-488. Over residues Ser-648–Ser-665 the composition is skewed to polar residues. Positions Ser-688–Glu-699 are enriched in low complexity. Positions Phe-721 to Ile-732 are enriched in polar residues. 2 stretches are compositionally biased toward low complexity: residues Ser-733–Ser-760 and Thr-767–Thr-780. The segment covering Asp-781–Pro-790 has biased composition (polar residues). Positions Lys-829–Lys-841 are enriched in basic residues. Composition is skewed to low complexity over residues Asn-853–Ser-864, Ser-912–Gln-974, Asp-1053–Glu-1072, and Gly-1096–Ser-1109.

This Dictyostelium discoideum (Social amoeba) protein is ELMO domain-containing protein F (elmoF).